A 187-amino-acid polypeptide reads, in one-letter code: Peptidyl-tRNA hydrolase (187 aa).

Tyr-18 provides a ligand contact to tRNA. His-23 acts as the Proton acceptor in catalysis. TRNA-binding residues include Phe-65, Asn-67, and Asn-113.

This sequence belongs to the PTH family. In terms of assembly, monomer.

The protein resides in the cytoplasm. The enzyme catalyses an N-acyl-L-alpha-aminoacyl-tRNA + H2O = an N-acyl-L-amino acid + a tRNA + H(+). In terms of biological role, hydrolyzes ribosome-free peptidyl-tRNAs (with 1 or more amino acids incorporated), which drop off the ribosome during protein synthesis, or as a result of ribosome stalling. Its function is as follows. Catalyzes the release of premature peptidyl moieties from peptidyl-tRNA molecules trapped in stalled 50S ribosomal subunits, and thus maintains levels of free tRNAs and 50S ribosomes. The sequence is that of Peptidyl-tRNA hydrolase from Coxiella burnetii (strain CbuG_Q212) (Coxiella burnetii (strain Q212)).